The chain runs to 80 residues: Metallothionein-like protein 2B (80 aa).

This sequence belongs to the metallothionein superfamily. Type 15 family. In terms of tissue distribution, highly expressed in stems. Expressed in leaves and rachis.

Metallothioneins have a high content of cysteine residues that bind various heavy metals. The protein is Metallothionein-like protein 2B (MT2B) of Oryza sativa subsp. japonica (Rice).